The sequence spans 455 residues: tRNA modification GTPase MnmE (455 aa).

Residues Arg-24, Glu-81, and Lys-120 each coordinate (6S)-5-formyl-5,6,7,8-tetrahydrofolate. The region spanning 216–378 (GMTVVIAGRP…LREHLKACMG (163 aa)) is the TrmE-type G domain. Asn-226 is a K(+) binding site. GTP is bound by residues 226–231 (NAGKSS), 245–251 (TDIAGTT), 270–273 (DTAG), and 335–338 (NKAD). Ser-230 is a binding site for Mg(2+). The K(+) site is built by Thr-245, Ile-247, and Thr-250. Thr-251 contacts Mg(2+). Lys-455 is a binding site for (6S)-5-formyl-5,6,7,8-tetrahydrofolate.

The protein belongs to the TRAFAC class TrmE-Era-EngA-EngB-Septin-like GTPase superfamily. TrmE GTPase family. As to quaternary structure, homodimer. Heterotetramer of two MnmE and two MnmG subunits. Requires K(+) as cofactor.

Its subcellular location is the cytoplasm. Its function is as follows. Exhibits a very high intrinsic GTPase hydrolysis rate. Involved in the addition of a carboxymethylaminomethyl (cmnm) group at the wobble position (U34) of certain tRNAs, forming tRNA-cmnm(5)s(2)U34. The chain is tRNA modification GTPase MnmE from Ectopseudomonas mendocina (strain ymp) (Pseudomonas mendocina).